The chain runs to 158 residues: MSYTITDPSKLAYLSSAWADPNSLINLCTNSLGNQFQTQQARTTVQQQFADVWQPVPTLTSRFPAGAGHFRVYRYEPILEPLITFLMGTFDTRNRIIEVRNPQNPTTTETLDATRRVDDATVAIRSAINNLLNELVRGNGMYNQVSFETMSGLTWTSS.

Ser2 bears the N-acetylserine; by host mark.

It belongs to the virgaviridae capsid protein family.

It localises to the virion. Functionally, capsid protein self-assembles to form rod-shaped virions about 18 nm in diameter with a central canal enclosing the viral genomic RNA. The protein is Capsid protein (CP) of Odontoglossum ringspot virus (isolate Korean Cy) (ORSV-Cy).